The chain runs to 498 residues: Probable malate:quinone oxidoreductase (498 aa).

Belongs to the MQO family. Requires FAD as cofactor.

The enzyme catalyses (S)-malate + a quinone = a quinol + oxaloacetate. It participates in carbohydrate metabolism; tricarboxylic acid cycle; oxaloacetate from (S)-malate (quinone route): step 1/1. In Prochlorococcus marinus (strain MIT 9301), this protein is Probable malate:quinone oxidoreductase.